A 229-amino-acid chain; its full sequence is MDRLLLVLLSSASLLLTVYGIKHHIVTKSWSEAQSDCLQYLRVESPGRYLSHRYRDNQTSKQLIFCIILNLRIYDPTQNVLRLKAMGQFFNPDKTDTLYVNRTNACLLRVKVPPLVDSSEDSQLYSGVMGTLYEVFRCFYHCYGNINAIAPKLPPTVLELEKIQQECARMVGVSERLLDGGLQLSSHPRYSKLPRCIMLRSGGSVDYLTHRNNSSRRFKLKKNVENDTL.

The signal sequence occupies residues M1–G20. C66 and C106 are disulfide-bonded.

This sequence belongs to the PBP/GOBP family.

It localises to the secreted. In terms of biological role, present in the aqueous fluid surrounding olfactory sensory dendrites and are thought to aid in the capture and transport of hydrophobic odorants into and through this fluid. This Anopheles gambiae (African malaria mosquito) protein is General odorant-binding protein 69 (Obp69).